Consider the following 416-residue polypeptide: E3 ubiquitin-protein ligase RNFT1 (416 aa).

Disordered stretches follow at residues 1–50 (MKHR…MSLP) and 68–117 (DLSS…DSRE). Over residues 7-19 (HERQSSTESKNLK) the composition is skewed to basic and acidic residues. Composition is skewed to polar residues over residues 20–45 (ETTQLIMQSSSDHTHHQLGSNDSPSA) and 68–80 (DLSSQDSQHVARS). Residues 81–100 (NSRRVRPSTHGRSPSRHGHT) show a composition bias toward basic residues. 6 helical membrane passes run 146 to 166 (LVVQHITGISVGIGLLTTFLY), 184 to 204 (LQCLWVLVFLLFSSFLLYYTF), 214 to 234 (VFMNPSLGPLHFFDALWVVGI), 237 to 257 (FIGKFFFMGLKCIILLVPSFV), 265 to 287 (YWYMALEELAQCYCTLVSTPVWF), and 302 to 322 (WHFGILLALLYLILKILIIFG). The required for ubiquitin ligase activity and for protection against ER stress-induced cell death stretch occupies residues 349-400 (CSEADGMCAICQAEFTKPIALICQHVFCEECISSWFNKEKTCPLCRTLISNH). The segment at 356–394 (CAICQAEFTKPIALICQHVFCEECISSWFNKEKTCPLCR) adopts an RING-type zinc-finger fold.

The protein localises to the endoplasmic reticulum membrane. The enzyme catalyses S-ubiquitinyl-[E2 ubiquitin-conjugating enzyme]-L-cysteine + [acceptor protein]-L-lysine = [E2 ubiquitin-conjugating enzyme]-L-cysteine + N(6)-ubiquitinyl-[acceptor protein]-L-lysine.. It participates in protein modification; protein ubiquitination. In terms of biological role, E3 ubiquitin-protein ligase that acts in the endoplasmic reticulum (ER)-associated degradation (ERAD) pathway, which targets misfolded proteins that accumulate in the endoplasmic reticulum (ER) for ubiquitination and subsequent proteasome-mediated degradation. Protects cells from ER stress-induced apoptosis. The polypeptide is E3 ubiquitin-protein ligase RNFT1 (rnft1) (Xenopus laevis (African clawed frog)).